The following is a 361-amino-acid chain: Carbon monoxide-induced hydrogenase (361 aa).

Ni(2+) is bound by residues Cys-64, Cys-67, Cys-355, and Cys-358.

It to E.coli formate hydrogenlyase hydrogenase isozyme 3 and to bovine mitochondrial NADH-ubiquinone oxidoreductase. Requires Ni(2+) as cofactor.

Functionally, the carbon monoxide dehydrogenase (CODH) oxidizes carbon monoxide coupled, via CooF, to the reduction of a hydrogen cation by a hydrogenase (probably CooH). The chain is Carbon monoxide-induced hydrogenase (cooH) from Rhodospirillum rubrum.